The primary structure comprises 422 residues: Target of rapamycin complex 2 subunit bit61 (422 aa).

Polar residues predominate over residues 48–69 (VTTKESNVGDSDTTENIKSPFN). The disordered stretch occupies residues 48 to 101 (VTTKESNVGDSDTTENIKSPFNGQWPFSRRSSQSSSHPVFEETHWSKHSKRPGK). Residues S109, S132, and S201 each carry the phosphoserine modification.

It belongs to the BIT61 family. In terms of assembly, the target of rapamycin complex 2 (TORC2) is composed of at least bit61, pop3/wat1, sin1, ste20 and tor1. Post-translationally, either Thr-23, Thr-25 or Ser-26 and Ser-78 or Ser-79 are phosphorylated as well.

It localises to the cytoplasm. The protein localises to the nucleus. In terms of biological role, component of TORC2, which regulates multiple cellular processes to control cell growth in response to environmental signals. TORC2 is required for cell survival under various stress conditions. TORC2 positively controls G1 cell-cycle arrest, sexual development and amino acid uptake. Positively regulates amino acid uptake through the control of expression of amino acid permeases. This Schizosaccharomyces pombe (strain 972 / ATCC 24843) (Fission yeast) protein is Target of rapamycin complex 2 subunit bit61.